The sequence spans 865 residues: Alanine--tRNA ligase (865 aa).

Residues histidine 556, histidine 560, cysteine 660, and histidine 664 each contribute to the Zn(2+) site.

This sequence belongs to the class-II aminoacyl-tRNA synthetase family. Requires Zn(2+) as cofactor.

The protein resides in the cytoplasm. The catalysed reaction is tRNA(Ala) + L-alanine + ATP = L-alanyl-tRNA(Ala) + AMP + diphosphate. In terms of biological role, catalyzes the attachment of alanine to tRNA(Ala) in a two-step reaction: alanine is first activated by ATP to form Ala-AMP and then transferred to the acceptor end of tRNA(Ala). Also edits incorrectly charged Ser-tRNA(Ala) and Gly-tRNA(Ala) via its editing domain. The polypeptide is Alanine--tRNA ligase (Ruthia magnifica subsp. Calyptogena magnifica).